The following is a 182-amino-acid chain: Keratin, high-sulfur matrix protein, B2D (182 aa).

Repeat copies occupy residues 27-36 (PTCCQTSCCQ), 37-46 (PTSIQTSCCQ), 47-56 (PTSIQTSCCQ), 57-66 (PTSIQTSCCQ), 67-76 (PISIQTSCCQ), and 77-86 (PTCLQTSGCE). Positions 27 to 86 (PTCCQTSCCQPTSIQTSCCQPTSIQTSCCQPTSIQTSCCQPISIQTSCCQPTCLQTSGCE) are 6 X 10 AA tandem repeats.

Functionally, the keratin products of mammalian epidermal derivatives such as wool and hair consist of microfibrils embedded in a rigid matrix of other proteins. The matrix proteins include the high-sulfur and high-tyrosine keratins, having molecular weights of 6-20 kDa, whereas the microfibrils contain the larger, low-sulfur keratins (40-56 kDa). The protein is Keratin, high-sulfur matrix protein, B2D of Ovis aries (Sheep).